The primary structure comprises 209 residues: MSQVDINHARALVYQLLSSLFAREVDEQRLKELTSEAAQQFWEQLSLEANFTQSVDKIRSTLNGIKDDEALLELAADYCGLFLVGTKHSASPYASLYLSGEDEPLLFGEQHQQMSEFLHQSKLQVQSHFPEPADHLAVMLAYMAHLFCHSENSVQLSFLQTCFNSWLAKFINHLTQCNKNGFYSAVATLTLAWVKQDIAQLEPAVAIIS.

Belongs to the TorD/DmsD family. TorD subfamily.

It is found in the cytoplasm. In terms of biological role, involved in the biogenesis of TorA. Acts on TorA before the insertion of the molybdenum cofactor and, as a result, probably favors a conformation of the apoenzyme that is competent for acquiring the cofactor. In Shewanella massilia, this protein is Chaperone protein TorD.